Here is a 415-residue protein sequence, read N- to C-terminus: Serine hydroxymethyltransferase (415 aa).

(6S)-5,6,7,8-tetrahydrofolate contacts are provided by residues L117 and 121–123 (GHL). K226 carries the N6-(pyridoxal phosphate)lysine modification.

Belongs to the SHMT family. As to quaternary structure, homodimer. The cofactor is pyridoxal 5'-phosphate.

The protein resides in the cytoplasm. The enzyme catalyses (6R)-5,10-methylene-5,6,7,8-tetrahydrofolate + glycine + H2O = (6S)-5,6,7,8-tetrahydrofolate + L-serine. Its pathway is one-carbon metabolism; tetrahydrofolate interconversion. The protein operates within amino-acid biosynthesis; glycine biosynthesis; glycine from L-serine: step 1/1. In terms of biological role, catalyzes the reversible interconversion of serine and glycine with tetrahydrofolate (THF) serving as the one-carbon carrier. This reaction serves as the major source of one-carbon groups required for the biosynthesis of purines, thymidylate, methionine, and other important biomolecules. Also exhibits THF-independent aldolase activity toward beta-hydroxyamino acids, producing glycine and aldehydes, via a retro-aldol mechanism. This Dehalococcoides mccartyi (strain CBDB1) protein is Serine hydroxymethyltransferase.